We begin with the raw amino-acid sequence, 724 residues long: Degenerin mec-10 (724 aa).

Over 1-125 the chain is Cytoplasmic; that stretch reads MNRGPPNPRM…GQAPNSLYRA (125 aa). The helical transmembrane segment at 126–146 threads the bilayer; the sequence is VWVFLLLICAIQFINQAVAVI. The Extracellular portion of the chain corresponds to 147 to 684; it reads QKYQKMDKIT…FGGHLGLWSG (538 aa). Residues Asn-294, Asn-370, Asn-463, Asn-605, and Asn-624 are each glycosylated (N-linked (GlcNAc...) asparagine). A helical transmembrane segment spans residues 685 to 705; the sequence is VSVMTCCEFVCLVLELLYMAV. Over 706 to 724 the chain is Cytoplasmic; that stretch reads THHITQERIRRRENAANEF.

The protein belongs to the amiloride-sensitive sodium channel (TC 1.A.6) family. The channel is probably composed of at least the mec-2, mec-4, mec-6 and mec-10 subunits.

It is found in the cell membrane. In terms of biological role, amiloride-sensitive sodium channel subunit required for mechanosensory transduction (touch sensitivity). Negatively regulates the turning step of male mating behavior. The polypeptide is Degenerin mec-10 (Caenorhabditis briggsae).